Here is an 895-residue protein sequence, read N- to C-terminus: Androgen receptor (895 aa).

Positions 1-533 are modulating; it reads MEVQLGLGRV…PIDYYFPPQK (533 aa). The interaction with ZNF318 stretch occupies residues 1–562; that stretch reads MEVQLGLGRV…GSCKVFFKRA (562 aa). Disordered regions lie at residues 33–150 and 178–211; these read VIQN…LSLL and QQQQ…YLEG. Low complexity-rich tracts occupy residues 44 to 81 and 178 to 200; these read AASA…GSPQ and QQQQ…ASGA. At Ser-65 the chain carries Phosphoserine; by CDK9. At Ser-79 the chain carries Phosphoserine. Residues 201–211 show a composition bias toward polar residues; the sequence is PTSSKDNYLEG. Residue Tyr-208 is modified to Phosphotyrosine; by CSK. Ser-241 is modified (phosphoserine). Tyr-252 carries the post-translational modification Phosphotyrosine; by CSK and TNK2. Tyr-292, Tyr-331, Tyr-342, and Tyr-347 each carry phosphotyrosine; by CSK. At Tyr-348 the chain carries Phosphotyrosine; by CSK and TNK2. A Glycyl lysine isopeptide (Lys-Gly) (interchain with G-Cter in SUMO) cross-link involves residue Lys-371. Tyr-378 is subject to Phosphotyrosine; by CSK. A Glycyl lysine isopeptide (Lys-Gly) (interchain with G-Cter in SUMO) cross-link involves residue Lys-496. Residues Tyr-510 and Tyr-527 each carry the phosphotyrosine; by CSK modification. The interval 527–894 is interaction with LPXN; that stretch reads YYFPPQKTCL…GKVKPIYFHT (368 aa). The nuclear receptor DNA-binding region spans 534-607; that stretch reads TCLICGDEAS…AGMTLGARKL (74 aa). 2 NR C4-type zinc fingers span residues 535-555 and 571-595; these read CLIC…CGSC and CASR…LRKC. Positions 547–637 are interaction with HIPK3; the sequence is YGALTCGSCK…TEETAQKLTV (91 aa). An interaction with CCAR1 region spans residues 567–894; that stretch reads QKYLCASRND…GKVKPIYFHT (328 aa). The tract at residues 600 to 894 is interaction with KAT7; the sequence is MTLGARKLKK…GKVKPIYFHT (295 aa). At Ser-626 the chain carries Phosphoserine; by STK4/MST1. One can recognise an NR LBD domain in the interval 644–875; that stretch reads ECQPIFLNVL…DFPEMMAEII (232 aa). 2 residues coordinate 17beta-hydroxy-5alpha-androstan-3-one: Asn-681 and Arg-728. Residues Lys-821 and Lys-823 each participate in a glycyl lysine isopeptide (Lys-Gly) (interchain with G-Cter in ubiquitin) cross-link. A 17beta-hydroxy-5alpha-androstan-3-one-binding site is contributed by Thr-853. Residue Tyr-891 is modified to Phosphotyrosine; by CSK.

It belongs to the nuclear hormone receptor family. NR3 subfamily. As to quaternary structure, binds DNA as a homodimer. Part of a ternary complex containing AR, EFCAB6/DJBP and PARK7. Interacts with HIPK3 and NR0B2 in the presence of androgen. The ligand binding domain interacts with KAT7/HBO1 in the presence of dihydrotestosterone. Interacts with EFCAB6/DJBP, PQBP1, RANBP9, RBAK, SPDEF, SRA1, TGFB1I1 and RREB1. Interacts with ZMIZ1/ZIMP10 and ZMIZ2/ZMIP7 which both enhance its transactivation activity. Interacts with SLC30A9 and RAD54L2/ARIP4. Interacts with MACROD1 (via macro domain). Interacts via the ligand-binding domain with LXXLL and FXXLF motifs from NCOA1, NCOA2, NCOA3 and MAGEA11. Interacts (via nuclear receptor DNA binding domain and nuclear receptor ligand binding domain) with NCOA4. The AR N-terminal poly-Gln region binds Ran resulting in enhancement of AR-mediated transactivation. Ran-binding decreases as the poly-Gln length increases. Interacts with HIP1 (via coiled coil domain). Interacts (via ligand-binding domain) with TRIM68. Interacts with TNK2. Interacts with USP26. Interacts with RNF6. Interacts (regulated by RNF6 probably through polyubiquitination) with RNF14; regulates AR transcriptional activity. Interacts with PRMT2 and TRIM24. Interacts with RACK1. Interacts with RANBP10; this interaction enhances dihydrotestosterone-induced AR transcriptional activity. Interacts with PRPF6 in a hormone-independent way; this interaction enhances dihydrotestosterone-induced AR transcriptional activity. Interacts with STK4/MST1. Interacts with ZIPK/DAPK3. Interacts with LPXN. Interacts with MAK. Part of a complex containing AR, MAK and NCOA3. Interacts with CRY1. Interacts with CCAR1 and GATA2. Interacts with ZNF318. Interacts with BUD31. Interacts with ARID4A. Interacts with ARID4B. Interacts (via NR LBD domain) with ZBTB7A; the interaction is direct and androgen-dependent. Interacts with NCOR1. Interacts with NCOR2. Interacts with CRY2 in a ligand-dependent manner. Phosphorylated in prostate cancer cells in response to several growth factors including EGF. Phosphorylation is induced by c-Src kinase (CSK). Tyr-510 is one of the major phosphorylation sites and an increase in phosphorylation and Src kinase activity is associated with prostate cancer progression. Phosphorylation by TNK2 enhances the DNA-binding and transcriptional activity. Phosphorylation at Ser-65 by CDK9 regulates AR promoter selectivity and cell growth. In terms of processing, sumoylated on Lys-371 (major) and Lys-496. Ubiquitinated. Deubiquitinated by USP26. 'Lys-6' and 'Lys-27'-linked polyubiquitination by RNF6 modulates AR transcriptional activity and specificity. Post-translationally, palmitoylated by ZDHHC7 and ZDHHC21. Palmitoylation is required for plasma membrane targeting and for rapid intracellular signaling via ERK and AKT kinases and cAMP generation.

The protein localises to the nucleus. Its subcellular location is the cytoplasm. Its function is as follows. Steroid hormone receptors are ligand-activated transcription factors that regulate eukaryotic gene expression and affect cellular proliferation and differentiation in target tissues. Transcription factor activity is modulated by bound coactivator and corepressor proteins like ZBTB7A that recruits NCOR1 and NCOR2 to the androgen response elements/ARE on target genes, negatively regulating androgen receptor signaling and androgen-induced cell proliferation. Transcription activation is also down-regulated by NR0B2. Activated, but not phosphorylated, by HIPK3 and ZIPK/DAPK3. The chain is Androgen receptor (AR) from Macaca mulatta (Rhesus macaque).